We begin with the raw amino-acid sequence, 597 residues long: Protein disulfide isomerase-like 1-4 (597 aa).

Positions 1–25 (MAFRVLLLFSLTALLIFSAVSPSFA) are cleaved as a signal peptide. Acidic residues-rich tracts occupy residues 37-49 (LSFL…DDVP) and 61-84 (DEFE…EGDF). The disordered stretch occupies residues 37–101 (LSFLEDLKED…SDPLPTPEID (65 aa)). In terms of domain architecture, Thioredoxin 1 spans 85–208 (SDLGNPDSDP…IVTWVKKKIG (124 aa)). Residue Asn-112 is glycosylated (N-linked (GlcNAc...) asparagine). Residues Cys-132 and Cys-135 each act as nucleophile in the active site. Cys-132 and Cys-135 are disulfide-bonded. N-linked (GlcNAc...) asparagine glycosylation is found at Asn-213 and Asn-342. Residues 429–550 (FYKSDPIPEK…FYKFLRKHAT (122 aa)) enclose the Thioredoxin 2 domain. Catalysis depends on nucleophile residues Cys-471 and Cys-474. Cys-471 and Cys-474 are disulfide-bonded. Asn-524 carries N-linked (GlcNAc...) asparagine glycosylation. The tract at residues 555–597 (LEKPASTESPKTAESTPKVETTETKESPDSTTKSSQSDSKDEL) is disordered. A compositionally biased stretch (polar residues) spans 560-573 (STESPKTAESTPKV). The short motif at 594–597 (KDEL) is the Prevents secretion from ER element.

Belongs to the protein disulfide isomerase family. In terms of assembly, interacts with MEE8 and MED37A. Expressed in germinating seedling, including the cotyledons and hypocotyl, in vascular tissues, in pollen grains, root tips, leaf trichomes, developing seeds and siliques.

The protein resides in the endoplasmic reticulum lumen. Its subcellular location is the golgi apparatus. It is found in the vacuole. It localises to the nucleus. The protein localises to the secreted. The protein resides in the cell wall. The catalysed reaction is Catalyzes the rearrangement of -S-S- bonds in proteins.. Its function is as follows. Acts as a protein-folding catalyst that interacts with nascent polypeptides to catalyze the formation, isomerization, and reduction or oxidation of disulfide bonds. The chain is Protein disulfide isomerase-like 1-4 (PDIL1-4) from Arabidopsis thaliana (Mouse-ear cress).